The chain runs to 214 residues: uncharacterized protein (214 aa).

This sequence belongs to the uracil-DNA glycosylase (UDG) superfamily.

This is an uncharacterized protein from Haemophilus influenzae (strain ATCC 51907 / DSM 11121 / KW20 / Rd).